We begin with the raw amino-acid sequence, 315 residues long: ATP synthase gamma chain (315 aa).

The protein belongs to the ATPase gamma chain family. In terms of assembly, F-type ATPases have 2 components, CF(1) - the catalytic core - and CF(0) - the membrane proton channel. CF(1) has five subunits: alpha(3), beta(3), gamma(1), delta(1), epsilon(1). CF(0) has three main subunits: a, b and c.

The protein localises to the cellular thylakoid membrane. Functionally, produces ATP from ADP in the presence of a proton gradient across the membrane. The gamma chain is believed to be important in regulating ATPase activity and the flow of protons through the CF(0) complex. In Trichormus variabilis (strain ATCC 29413 / PCC 7937) (Anabaena variabilis), this protein is ATP synthase gamma chain.